Consider the following 397-residue polypeptide: Mitochondrial inner membrane magnesium transporter LPE10 (397 aa).

The transit peptide at methionine 1–serine 37 directs the protein to the mitochondrion. A helical transmembrane segment spans residues leucine 316–isoleucine 336. Residues tyrosine 340–asparagine 343 carry the YGMN motif. A helical transmembrane segment spans residues glycine 354 to isoleucine 374.

This sequence belongs to the CorA metal ion transporter (MIT) (TC 1.A.35) family. Forms homooligomers. Interacts with MRS2.

The protein localises to the mitochondrion inner membrane. Functionally, mitochondrial inner membrane magnesium transporter required for mitochondrial magnesium homeostasis. Modulates the conductance of the MRS2 channel. Involved in the splicing of mRNA group II introns in mitochondria by affecting mitochondrial magnesium concentrations, which are critical for group II intron splicing. This chain is Mitochondrial inner membrane magnesium transporter LPE10 (LPE10), found in Candida glabrata (strain ATCC 2001 / BCRC 20586 / JCM 3761 / NBRC 0622 / NRRL Y-65 / CBS 138) (Yeast).